We begin with the raw amino-acid sequence, 61 residues long: MAAVCDICAKKPGFGNNRPWSRKITKRRFDPNIQRVRATVNGTPKRLNVCTGCLKAGKVTR.

The protein belongs to the bacterial ribosomal protein bL28 family.

The polypeptide is Large ribosomal subunit protein bL28 (Nocardioides sp. (strain ATCC BAA-499 / JS614)).